The sequence spans 198 residues: Ribosome maturation factor RimP (198 aa).

The protein belongs to the RimP family.

The protein localises to the cytoplasm. Its function is as follows. Required for maturation of 30S ribosomal subunits. The protein is Ribosome maturation factor RimP of Rhizobium rhizogenes (strain K84 / ATCC BAA-868) (Agrobacterium radiobacter).